We begin with the raw amino-acid sequence, 408 residues long: NFATC2-interacting protein (408 aa).

The segment at 1 to 113 is disordered; sequence MAEPVGKRGR…LDPGEAPLVP (113 aa). Positions 24-40 are enriched in low complexity; it reads QRSPSRGTLDVVSVDLV. Phosphoserine is present on residues S41, S43, S73, S77, S79, S81, and S116. Glycyl lysine isopeptide (Lys-Gly) (interchain with G-Cter in SUMO2) cross-links involve residues K118 and K120. The interval 141–205 is disordered; sequence EEEVELADSS…TKSRKHTRAL (65 aa). Positions 169–181 are enriched in basic and acidic residues; sequence RTKDKEEKKKTEI. A phosphoserine mark is found at S187, S190, and S193. Positions 196–205 are enriched in basic residues; sequence TKSRKHTRAL. The stretch at 197 to 220 forms a coiled coil; it reads KSRKHTRALKKLSEVNKRLQDLRS. Phosphoserine occurs at positions 209 and 303. A phosphothreonine mark is found at T305 and T307. A Ubiquitin-like domain is found at 337–408; that stretch reads LQLRVQGKEK…ESGDLIEVWG (72 aa). Residues S358 and S379 each carry the phosphoserine modification.

Interacts with NFATC2, TRAF1, TRAF2 and PRMT1. Interacts with UBE2I/UBC9. Methylation at the N-terminus by PRMT1 modulates interaction with the NFAT complex and results in augmented cytokine production.

It localises to the nucleus. Its subcellular location is the cytoplasm. Functionally, in T-helper 2 (Th2) cells, regulates the magnitude of NFAT-driven transcription of a specific subset of cytokine genes, including IL3, IL4, IL5 and IL13, but not IL2. Recruits PRMT1 to the IL4 promoter; this leads to enhancement of histone H4 'Arg-3'-methylation and facilitates subsequent histone acetylation at the IL4 locus, thus promotes robust cytokine expression. Down-regulates formation of poly-SUMO chains by UBE2I/UBC9. The protein is NFATC2-interacting protein (NFATC2IP) of Macaca fascicularis (Crab-eating macaque).